Reading from the N-terminus, the 394-residue chain is Lipoyl synthase, chloroplastic (394 aa).

A chloroplast-targeting transit peptide spans 1 to 36 (MMHHCSITKPTFSISISTQKLHHHSSKFLNLGFRIR). [4Fe-4S] cluster is bound by residues C127, C132, C138, C158, C162, C165, and S373. The region spanning 141-362 (GGGDGVATAT…KTYGESIGFR (222 aa)) is the Radical SAM core domain.

The protein belongs to the radical SAM superfamily. Lipoyl synthase family. The cofactor is [4Fe-4S] cluster. As to expression, expressed in roots, leaves and flowers.

The protein localises to the plastid. Its subcellular location is the chloroplast. The enzyme catalyses [[Fe-S] cluster scaffold protein carrying a second [4Fe-4S](2+) cluster] + N(6)-octanoyl-L-lysyl-[protein] + 2 oxidized [2Fe-2S]-[ferredoxin] + 2 S-adenosyl-L-methionine + 4 H(+) = [[Fe-S] cluster scaffold protein] + N(6)-[(R)-dihydrolipoyl]-L-lysyl-[protein] + 4 Fe(3+) + 2 hydrogen sulfide + 2 5'-deoxyadenosine + 2 L-methionine + 2 reduced [2Fe-2S]-[ferredoxin]. It participates in protein modification; protein lipoylation via endogenous pathway; protein N(6)-(lipoyl)lysine from octanoyl-[acyl-carrier-protein]: step 2/2. Functionally, catalyzes the radical-mediated insertion of two sulfur atoms into the C-6 and C-8 positions of the octanoyl moiety bound to the lipoyl domains of lipoate-dependent enzymes, thereby converting the octanoylated domains into lipoylated derivatives. Together with LIP2P and LIP2P2 is essential for de novo plastidial protein lipoylation during seed development. This is Lipoyl synthase, chloroplastic from Arabidopsis thaliana (Mouse-ear cress).